The chain runs to 260 residues: Creatinine amidohydrolase (260 aa).

Residue Glu-34 participates in Mn(2+) binding. Positions 34, 36, and 45 each coordinate Zn(2+). Asp-45 serves as a coordination point for Mn(2+). Ser-78 is a binding site for creatine. Residue His-120 coordinates Mn(2+). Residue His-120 coordinates Zn(2+). Creatine-binding residues include Tyr-121, Trp-174, Asp-175, and His-178. Residue Glu-183 participates in Zn(2+) binding.

It belongs to the creatininase superfamily. As to quaternary structure, homohexamer; trimer of dimers. Zn(2+) is required as a cofactor. Mn(2+) serves as cofactor.

The catalysed reaction is creatinine + H2O = creatine. It functions in the pathway amine and polyamine degradation; creatinine degradation. With respect to regulation, is markedly inactivated in vitro by heavy metal ions, N-bromosuccinimide, ethoxyformic anhydride, and dye-sensitized photooxidation. Functionally, cyclic amidohydrolase that catalyzes the reversible conversion of creatinine to creatine. Is also active toward glycocyamidine, though the reaction rate is very low, but it is completely inert toward hydantoin and its derivatives. The chain is Creatinine amidohydrolase (crnA) from Pseudomonas putida (Arthrobacter siderocapsulatus).